Reading from the N-terminus, the 247-residue chain is Acetoacetate decarboxylase 1 (247 aa).

Lys-116 functions as the Schiff-base intermediate with acetoacetate in the catalytic mechanism.

The protein belongs to the ADC family.

It catalyses the reaction acetoacetate + H(+) = acetone + CO2. In terms of biological role, catalyzes the conversion of acetoacetate to acetone and carbon dioxide. The polypeptide is Acetoacetate decarboxylase 1 (Mesorhizobium japonicum (strain LMG 29417 / CECT 9101 / MAFF 303099) (Mesorhizobium loti (strain MAFF 303099))).